Consider the following 365-residue polypeptide: tRNA dimethylallyltransferase (365 aa).

Residue 23–30 (APTASGKT) coordinates ATP. A substrate-binding site is contributed by 25–30 (TASGKT). Interaction with substrate tRNA stretches follow at residues 48 to 51 (DSAL), 172 to 176 (QRITR), and 256 to 261 (RCVGYR).

It belongs to the IPP transferase family. As to quaternary structure, monomer. Mg(2+) is required as a cofactor.

It carries out the reaction adenosine(37) in tRNA + dimethylallyl diphosphate = N(6)-dimethylallyladenosine(37) in tRNA + diphosphate. Functionally, catalyzes the transfer of a dimethylallyl group onto the adenine at position 37 in tRNAs that read codons beginning with uridine, leading to the formation of N6-(dimethylallyl)adenosine (i(6)A). The sequence is that of tRNA dimethylallyltransferase from Psychrobacter sp. (strain PRwf-1).